The chain runs to 1409 residues: DNA-directed RNA polymerase subunit beta' (1409 aa).

C70, C72, C85, and C88 together coordinate Zn(2+). Mg(2+) contacts are provided by D461, D463, and D465. Zn(2+) is bound by residues C820, C894, C901, and C904.

Belongs to the RNA polymerase beta' chain family. In terms of assembly, the RNAP catalytic core consists of 2 alpha, 1 beta, 1 beta' and 1 omega subunit. When a sigma factor is associated with the core the holoenzyme is formed, which can initiate transcription. It depends on Mg(2+) as a cofactor. Requires Zn(2+) as cofactor.

It carries out the reaction RNA(n) + a ribonucleoside 5'-triphosphate = RNA(n+1) + diphosphate. Functionally, DNA-dependent RNA polymerase catalyzes the transcription of DNA into RNA using the four ribonucleoside triphosphates as substrates. This Ralstonia nicotianae (strain ATCC BAA-1114 / GMI1000) (Ralstonia solanacearum) protein is DNA-directed RNA polymerase subunit beta'.